The following is a 424-amino-acid chain: Glutamate-1-semialdehyde 2,1-aminomutase (424 aa).

K268 bears the N6-(pyridoxal phosphate)lysine mark.

It belongs to the class-III pyridoxal-phosphate-dependent aminotransferase family. HemL subfamily. The cofactor is pyridoxal 5'-phosphate.

It localises to the cytoplasm. It catalyses the reaction (S)-4-amino-5-oxopentanoate = 5-aminolevulinate. It participates in porphyrin-containing compound metabolism; protoporphyrin-IX biosynthesis; 5-aminolevulinate from L-glutamyl-tRNA(Glu): step 2/2. In Methanosarcina acetivorans (strain ATCC 35395 / DSM 2834 / JCM 12185 / C2A), this protein is Glutamate-1-semialdehyde 2,1-aminomutase.